We begin with the raw amino-acid sequence, 254 residues long: Emerin (254 aa).

Residue Met1 is modified to N-acetylmethionine. Residues 1 to 45 enclose the LEM domain; that stretch reads MDNYADLSDTELTTLLRRYNIPHGPVVGSTRRLYEKKIFEYETQR. Phosphoserine occurs at positions 8 and 29. Positions 46–222 are interaction with F-actin; the sequence is RRLSPPSSSA…PGAGLGQDRQ (177 aa). Phosphoserine; by PKA is present on Ser49. Phosphoserine occurs at positions 54, 60, 87, 98, 141, 142, and 143. The residue at position 161 (Tyr161) is a Phosphotyrosine. The interval 168–186 is interaction with CTNNB1; it reads RPVSASRSSLDLSYYPTSS. A phosphoserine mark is found at Ser171, Ser173, and Ser175. The chain crosses the membrane as a helical span at residues 223–243; it reads VPLWGQLLLFLVFVIVLFFIY.

Interacts with lamins A and C, BANF1, GMCL, BCLAF1 and YTHDC1/YT521. Interacts with TMEM43; the interaction retains emerin in the nuclear inner membrane. Interacts with SUN1 and SUN2. Interacts with ACTB, SPTAN1, F-actin, CTNNB1 and beta-tubulin. Interacts with TMEM201. Interacts with NEMP1. Post-translationally, found in four different phosphorylated forms, three of which appear to be associated with the cell cycle. As to expression, skeletal muscle, heart, colon, testis, ovary and pancreas.

It is found in the nucleus inner membrane. The protein resides in the nucleus outer membrane. In terms of biological role, stabilizes and promotes the formation of a nuclear actin cortical network. Stimulates actin polymerization in vitro by binding and stabilizing the pointed end of growing filaments. Inhibits beta-catenin activity by preventing its accumulation in the nucleus. Acts by influencing the nuclear accumulation of beta-catenin through a CRM1-dependent export pathway. Links centrosomes to the nuclear envelope via a microtubule association. Required for proper localization of non-farnesylated prelamin-A/C. Together with NEMP1, contributes to nuclear envelope stiffness in germ cells. EMD and BAF are cooperative cofactors of HIV-1 infection. Association of EMD with the viral DNA requires the presence of BAF and viral integrase. The association of viral DNA with chromatin requires the presence of BAF and EMD. The protein is Emerin (EMD) of Homo sapiens (Human).